The following is a 505-amino-acid chain: Membrane-bound O-acyltransferase GUP1 (505 aa).

Topologically, residues 1 to 217 (MFKAAMDASN…VAPIPLTDYN (217 aa)) are extracellular. Residues 218 to 238 (FVNYMAYITYAPLFIAGPIIT) form a helical membrane-spanning segment. The Cytoplasmic segment spans residues 239–266 (FNDYIYQSDYKAMSSVKDYKRTFIYFLR). A helical transmembrane segment spans residues 267-287 (FAFCILVMEFLLHFMYVVAVS). The Extracellular portion of the chain corresponds to 288–296 (KTKAWEGDT). A helical transmembrane segment spans residues 297–317 (PFQLSMLGLFNLNIIWLKLLI). At 318 to 377 (PWRLFRLWSLIDGIDPPENMIRCMDNNFSTLAFWRAWHRSYNRWIIRYIYIPLGGGGKYR) the chain is on the cytoplasmic side. Transmembrane regions (helical) follow at residues 378–398 (ILNSLCVFSFVAIWHDIELKL) and 399–419 (LMWGWLVVIFIIPELAATAIF). H392 is a catalytic residue. The Cytoplasmic portion of the chain corresponds to 420-430 (KNYQHEPWYRH). The chain crosses the membrane as a helical span at residues 431 to 451 (VCALGAVINIWMMMLANLFGF). Topologically, residues 452–464 (CMGKDGTMSLIKT) are extracellular. The chain crosses the membrane as a helical span at residues 465-485 (LFTTAVGLRFLFLSLGALFVG). Topologically, residues 486–505 (SQVMFELREAEKRRGVNVKC) are cytoplasmic.

Belongs to the membrane-bound acyltransferase family.

The protein localises to the cell membrane. It is found in the endoplasmic reticulum membrane. The protein resides in the mitochondrion membrane. Functionally, membrane-bound O-acyltransferase involved in the remodeling of glycosylphosphatidylinositol (GPI) anchors. Acts only on GPI-anchored proteins, but not on free GPI lipids. Also involved in lipid metabolism, having profound effects on sphingolipid-sterol-ordered domains integrity and assembly. Involved in cell integrity and apoptosis. This chain is Membrane-bound O-acyltransferase GUP1 (GUP1), found in Millerozyma farinosa (Yeast).